The sequence spans 67 residues: DNA-directed RNA polymerase subunit omega (67 aa).

The protein belongs to the RNA polymerase subunit omega family. As to quaternary structure, the RNAP catalytic core consists of 2 alpha, 1 beta, 1 beta' and 1 omega subunit. When a sigma factor is associated with the core the holoenzyme is formed, which can initiate transcription.

The catalysed reaction is RNA(n) + a ribonucleoside 5'-triphosphate = RNA(n+1) + diphosphate. Functionally, promotes RNA polymerase assembly. Latches the N- and C-terminal regions of the beta' subunit thereby facilitating its interaction with the beta and alpha subunits. The protein is DNA-directed RNA polymerase subunit omega of Nautilia profundicola (strain ATCC BAA-1463 / DSM 18972 / AmH).